The chain runs to 158 residues: 6,7-dimethyl-8-ribityllumazine synthase (158 aa).

Residues F22, 56–58 (ALE), and 80–82 (VVI) contribute to the 5-amino-6-(D-ribitylamino)uracil site. 85 to 86 (ET) is a (2S)-2-hydroxy-3-oxobutyl phosphate binding site. H88 serves as the catalytic Proton donor. Residue N113 participates in 5-amino-6-(D-ribitylamino)uracil binding. Residue R127 coordinates (2S)-2-hydroxy-3-oxobutyl phosphate.

The protein belongs to the DMRL synthase family.

The enzyme catalyses (2S)-2-hydroxy-3-oxobutyl phosphate + 5-amino-6-(D-ribitylamino)uracil = 6,7-dimethyl-8-(1-D-ribityl)lumazine + phosphate + 2 H2O + H(+). The protein operates within cofactor biosynthesis; riboflavin biosynthesis; riboflavin from 2-hydroxy-3-oxobutyl phosphate and 5-amino-6-(D-ribitylamino)uracil: step 1/2. Its function is as follows. Catalyzes the formation of 6,7-dimethyl-8-ribityllumazine by condensation of 5-amino-6-(D-ribitylamino)uracil with 3,4-dihydroxy-2-butanone 4-phosphate. This is the penultimate step in the biosynthesis of riboflavin. This chain is 6,7-dimethyl-8-ribityllumazine synthase, found in Neisseria gonorrhoeae (strain ATCC 700825 / FA 1090).